Consider the following 321-residue polypeptide: Lipoyl synthase (321 aa).

The [4Fe-4S] cluster site is built by Cys-68, Cys-73, Cys-79, Cys-94, Cys-98, Cys-101, and Ser-308. The 218-residue stretch at 80-297 (FNHGTATFMI…KEEAMAMGFT (218 aa)) folds into the Radical SAM core domain.

Belongs to the radical SAM superfamily. Lipoyl synthase family. [4Fe-4S] cluster is required as a cofactor.

The protein localises to the cytoplasm. It catalyses the reaction [[Fe-S] cluster scaffold protein carrying a second [4Fe-4S](2+) cluster] + N(6)-octanoyl-L-lysyl-[protein] + 2 oxidized [2Fe-2S]-[ferredoxin] + 2 S-adenosyl-L-methionine + 4 H(+) = [[Fe-S] cluster scaffold protein] + N(6)-[(R)-dihydrolipoyl]-L-lysyl-[protein] + 4 Fe(3+) + 2 hydrogen sulfide + 2 5'-deoxyadenosine + 2 L-methionine + 2 reduced [2Fe-2S]-[ferredoxin]. Its pathway is protein modification; protein lipoylation via endogenous pathway; protein N(6)-(lipoyl)lysine from octanoyl-[acyl-carrier-protein]: step 2/2. In terms of biological role, catalyzes the radical-mediated insertion of two sulfur atoms into the C-6 and C-8 positions of the octanoyl moiety bound to the lipoyl domains of lipoate-dependent enzymes, thereby converting the octanoylated domains into lipoylated derivatives. In Serratia proteamaculans (strain 568), this protein is Lipoyl synthase.